Consider the following 126-residue polypeptide: Aspartate 1-decarboxylase (126 aa).

Residue Ser-25 is the Schiff-base intermediate with substrate; via pyruvic acid of the active site. Ser-25 carries the post-translational modification Pyruvic acid (Ser). Residue Thr-57 participates in substrate binding. The active-site Proton donor is the Tyr-58. 73–75 (GGA) provides a ligand contact to substrate.

It belongs to the PanD family. Heterooctamer of four alpha and four beta subunits. Requires pyruvate as cofactor. Post-translationally, is synthesized initially as an inactive proenzyme, which is activated by self-cleavage at a specific serine bond to produce a beta-subunit with a hydroxyl group at its C-terminus and an alpha-subunit with a pyruvoyl group at its N-terminus.

Its subcellular location is the cytoplasm. The enzyme catalyses L-aspartate + H(+) = beta-alanine + CO2. The protein operates within cofactor biosynthesis; (R)-pantothenate biosynthesis; beta-alanine from L-aspartate: step 1/1. Catalyzes the pyruvoyl-dependent decarboxylation of aspartate to produce beta-alanine. This is Aspartate 1-decarboxylase from Stenotrophomonas maltophilia (strain R551-3).